Consider the following 195-residue polypeptide: Probable GTP-binding protein EngB (195 aa).

Residues 24-195 (GLSEVGLSGR…QIWNVIEKYL (172 aa)) enclose the EngB-type G domain. Residues 32–39 (GRSNVGKS), 59–63 (GKTQT), 77–80 (DVPG), 144–147 (TKED), and 176–178 (YSS) each bind GTP. The Mg(2+) site is built by Ser39 and Thr61.

This sequence belongs to the TRAFAC class TrmE-Era-EngA-EngB-Septin-like GTPase superfamily. EngB GTPase family. Mg(2+) serves as cofactor.

Functionally, necessary for normal cell division and for the maintenance of normal septation. The protein is Probable GTP-binding protein EngB of Staphylococcus saprophyticus subsp. saprophyticus (strain ATCC 15305 / DSM 20229 / NCIMB 8711 / NCTC 7292 / S-41).